The primary structure comprises 311 residues: Cbb3-type cytochrome c oxidase subunit CcoP1 (311 aa).

Transmembrane regions (helical) follow at residues 4–24 (FWSGYIALLTLGTIVALFWLI) and 56–76 (RWWFLLFIGTLVFGILYLVLY). 2 consecutive Cytochrome c domains span residues 130–209 (QAVK…RKDL) and 220–302 (ADLS…YSLS). The heme c site is built by C143, C146, H147, M186, C233, C236, H237, and M279.

Belongs to the CcoP / FixP family. In terms of assembly, component of the cbb3-type cytochrome c oxidase at least composed of CcoN, CcoO, CcoQ and CcoP. Heme c is required as a cofactor.

It localises to the cell inner membrane. It participates in energy metabolism; oxidative phosphorylation. In terms of biological role, C-type cytochrome. Part of the cbb3-type cytochrome c oxidase complex. CcoP subunit is required for transferring electrons from donor cytochrome c via its heme groups to CcoO subunit. From there, electrons are shuttled to the catalytic binuclear center of CcoN subunit where oxygen reduction takes place. The complex also functions as a proton pump. The sequence is that of Cbb3-type cytochrome c oxidase subunit CcoP1 from Stutzerimonas stutzeri (Pseudomonas stutzeri).